The chain runs to 230 residues: 5'-methylthioadenosine/S-adenosylhomocysteine nucleosidase (230 aa).

E12 acts as the Proton acceptor in catalysis. Substrate-binding positions include G78, M153, and 174-175; that span reads ME. The active-site Proton donor is the D198.

The protein belongs to the PNP/UDP phosphorylase family. MtnN subfamily.

The catalysed reaction is S-adenosyl-L-homocysteine + H2O = S-(5-deoxy-D-ribos-5-yl)-L-homocysteine + adenine. The enzyme catalyses S-methyl-5'-thioadenosine + H2O = 5-(methylsulfanyl)-D-ribose + adenine. It catalyses the reaction 5'-deoxyadenosine + H2O = 5-deoxy-D-ribose + adenine. It participates in amino-acid biosynthesis; L-methionine biosynthesis via salvage pathway; S-methyl-5-thio-alpha-D-ribose 1-phosphate from S-methyl-5'-thioadenosine (hydrolase route): step 1/2. Functionally, catalyzes the irreversible cleavage of the glycosidic bond in both 5'-methylthioadenosine (MTA) and S-adenosylhomocysteine (SAH/AdoHcy) to adenine and the corresponding thioribose, 5'-methylthioribose and S-ribosylhomocysteine, respectively. Also cleaves 5'-deoxyadenosine, a toxic by-product of radical S-adenosylmethionine (SAM) enzymes, into 5-deoxyribose and adenine. The polypeptide is 5'-methylthioadenosine/S-adenosylhomocysteine nucleosidase (Tolumonas auensis (strain DSM 9187 / NBRC 110442 / TA 4)).